We begin with the raw amino-acid sequence, 173 residues long: MILSGKEILKHIGEDIIIEPFSEERINPNSYNLTLFNELLVYKNDTLDMKIPNETEKLIIPEEGLLLEPGKLYLGRTNEFTQTNKYVPMLEGRSSTGRLGLFIHVTAGFGDIGFAGYWTLEIFCVQPIRIYPNTEICQIYYHNIDGEYDLYNSGKYQNNNGIQPSLMYKDFEK.

DCTP is bound by residues 93–98 (RSSTGR), aspartate 111, 119–121 (TLE), glutamine 138, and tyrosine 151. The Proton donor/acceptor role is filled by glutamate 121.

This sequence belongs to the dCTP deaminase family. In terms of assembly, homotrimer.

It carries out the reaction dCTP + 2 H2O = dUMP + NH4(+) + diphosphate. It participates in pyrimidine metabolism; dUMP biosynthesis; dUMP from dCTP: step 1/1. Functionally, bifunctional enzyme that catalyzes both the deamination of dCTP to dUTP and the hydrolysis of dUTP to dUMP without releasing the toxic dUTP intermediate. The polypeptide is dCTP deaminase, dUMP-forming (Clostridium botulinum (strain Alaska E43 / Type E3)).